A 243-amino-acid polypeptide reads, in one-letter code: BTB/POZ domain-containing protein At4g08455 (243 aa).

Positions 19 to 51 (KECYVEAGETEEELKREIDDLKAKVAFLRLSSS) form a coiled coil. In terms of domain architecture, BTB spans 64 to 136 (TDVVLIASED…LYTAEACLDE (73 aa)).

As to quaternary structure, interacts with CUL3A and CUL3B.

The protein operates within protein modification; protein ubiquitination. Its function is as follows. May act as a substrate-specific adapter of an E3 ubiquitin-protein ligase complex (CUL3-RBX1-BTB) which mediates the ubiquitination and subsequent proteasomal degradation of target proteins. The protein is BTB/POZ domain-containing protein At4g08455 of Arabidopsis thaliana (Mouse-ear cress).